The sequence spans 290 residues: Type II secretion system protein C (290 aa).

The Cytoplasmic portion of the chain corresponds to 1 to 28 (MTLPFRNDLLSSLLARCKTVPLSRFSQP). Residues 29-46 (LFWLLLLLLAHQCAGLTW) form a helical membrane-spanning segment. The Periplasmic portion of the chain corresponds to 47-290 (RLLDLGSQQA…LYDVYVGLSE (244 aa)).

This sequence belongs to the GSP C family.

It localises to the cell inner membrane. Involved in a type II secretion system (T2SS, formerly general secretion pathway, GSP) for the export of proteins. The protein is Type II secretion system protein C (exeC) of Aeromonas hydrophila.